Here is a 213-residue protein sequence, read N- to C-terminus: Na(+)-translocating NADH-quinone reductase subunit D (213 aa).

6 consecutive transmembrane segments (helical) span residues 21–41 (PLIAILGICSALAVTTTVNTA), 42–62 (ITMGLAVSFVTGCSSFFVSLL), 69–86 (SVRMITQLIIISLFVIVI), 101–121 (LSVFVGLIITNCIVMGRAESL), 131–151 (FLDGLASGLGYGWVLVTVSIV), and 183–203 (FGLMVLAPSAFFLLGIMIWGV).

Belongs to the NqrDE/RnfAE family. As to quaternary structure, composed of six subunits; NqrA, NqrB, NqrC, NqrD, NqrE and NqrF.

The protein localises to the cell inner membrane. It catalyses the reaction a ubiquinone + n Na(+)(in) + NADH + H(+) = a ubiquinol + n Na(+)(out) + NAD(+). In terms of biological role, NQR complex catalyzes the reduction of ubiquinone-1 to ubiquinol by two successive reactions, coupled with the transport of Na(+) ions from the cytoplasm to the periplasm. NqrA to NqrE are probably involved in the second step, the conversion of ubisemiquinone to ubiquinol. The chain is Na(+)-translocating NADH-quinone reductase subunit D from Chlamydia caviae (strain ATCC VR-813 / DSM 19441 / 03DC25 / GPIC) (Chlamydophila caviae).